Consider the following 3330-residue polypeptide: Laminin subunit alpha-3 (3330 aa).

Residues 1-31 form the signal peptide; that stretch reads MAVALGRAPRSLPLLLTLLLLLLLRMSPSWS. Residues 40–295 form the Laminin N-terminal domain; sequence SSRSLHPPYF…SIKDISVGGR (256 aa). Asn-139 carries N-linked (GlcNAc...) asparagine glycosylation. The domain V stretch occupies residues 295–725; it reads RCVCNGHAEA…NNYYFPDLHH (431 aa). Cystine bridges form between Cys-296–Cys-305, Cys-298–Cys-316, Cys-318–Cys-327, Cys-330–Cys-350, Cys-353–Cys-362, Cys-355–Cys-387, Cys-390–Cys-399, Cys-402–Cys-420, Cys-423–Cys-433, Cys-425–Cys-440, Cys-442–Cys-451, Cys-454–Cys-464, Cys-488–Cys-500, Cys-490–Cys-506, Cys-508–Cys-517, Cys-520–Cys-530, Cys-533–Cys-545, Cys-535–Cys-552, Cys-554–Cys-563, Cys-566–Cys-583, Cys-628–Cys-642, Cys-630–Cys-649, Cys-651–Cys-660, Cys-663–Cys-678, Cys-681–Cys-693, Cys-683–Cys-700, and Cys-702–Cys-711. 8 consecutive Laminin EGF-like domains span residues 296–350, 353–420, 423–464, 488–530, 533–576, 582–625, 628–678, and 681–725; these read CVCN…HNEC, CNCH…LHGC, CSCD…FPFC, CDCN…FPIC, CQCS…FPYC, VCHP…PRGC, CQCH…YFGC, and CQCD…DLHH. A glycan (N-linked (GlcNAc...) asparagine) is linked at Asn-445. The segment at 793 to 1262 is domain IV 1 (domain IV B); the sequence is TEAISGRITL…VAFYHNGAIP (470 aa). A domain III B region spans residues 1263-1462; it reads CECDPAGTAG…CFCFGVNTDC (200 aa). Disulfide bonds link Cys-1309/Cys-1316, Cys-1311/Cys-1323, Cys-1325/Cys-1334, Cys-1337/Cys-1350, Cys-1353/Cys-1368, Cys-1355/Cys-1375, Cys-1377/Cys-1386, Cys-1389/Cys-1399, Cys-1402/Cys-1414, Cys-1404/Cys-1421, Cys-1423/Cys-1432, and Cys-1435/Cys-1450. 3 Laminin EGF-like domains span residues 1309-1352, 1353-1401, and 1402-1452; these read CNCG…GCDV, CNCS…ECVP, and CSCN…GCTK. Asn-1354 carries an N-linked (GlcNAc...) asparagine glycan. The 10-residue stretch at 1453–1462 folds into the Laminin EGF-like 12; first part domain; the sequence is CFCFGVNTDC. The 185-residue stretch at 1466–1650 folds into the Laminin IV type A domain; the sequence is HKQRAKFVDM…SGPRAHLVEM (185 aa). The Laminin EGF-like 12; second part domain maps to 1651–1683; it reads CACPPDYTGDSCQGCRPGYYWDNKSLPVGRCVP. A domain III A region spans residues 1651–1818; sequence CACPPDYTGD…DGSPAEECDD (168 aa). An N-linked (GlcNAc...) asparagine glycan is attached at Asn-1673. 8 cysteine pairs are disulfide-bonded: Cys-1684–Cys-1693, Cys-1686–Cys-1700, Cys-1703–Cys-1712, Cys-1715–Cys-1728, Cys-1731–Cys-1743, Cys-1733–Cys-1752, Cys-1754–Cys-1763, and Cys-1766–Cys-1781. Laminin EGF-like domains lie at 1684–1730 and 1731–1783; these read CNCN…SCRV and CPCP…SCQP. The region spanning 1784–1818 is the Laminin EGF-like 15; truncated domain; it reads CNCNSNGQLGPCDPLTGDCVNQEPKDGSPAEECDD. The interval 1819–2385 is domain II and I; it reads CDSCVMTLLN…ARDAANKVAI (567 aa). 4 coiled-coil regions span residues 1851–1980, 2012–2057, 2088–2165, and 2211–2238; these read TGAL…LRSR, VENN…HENE, LLQT…GDEL, and KRAK…QQVS. N-linked (GlcNAc...) asparagine glycosylation is present at Asn-2159. A glycan (N-linked (GlcNAc...) asparagine) is linked at Asn-2261. The Cell attachment site signature appears at 2274 to 2276; the sequence is RGD. Residues 2318–2383 are a coiled coil; the sequence is SARREDFSKA…QQARDAANKV (66 aa). N-linked (GlcNAc...) asparagine glycosylation is found at Asn-2332, Asn-2361, Asn-2498, Asn-2580, and Asn-2747. Laminin G-like domains lie at 2386–2587, 2594–2756, 2763–2923, 2983–3147, and 3154–3327; these read PMRF…VEPC, SDKN…TKKC, VRTA…LGGC, ALQF…VSPC, and KGIY…LNGC. 3 cysteine pairs are disulfide-bonded: Cys-2557-Cys-2587, Cys-2733-Cys-2756, and Cys-2891-Cys-2923. Asn-3094 carries N-linked (GlcNAc...) asparagine glycosylation. A disulfide bond links Cys-3124 and Cys-3147. A glycan (N-linked (GlcNAc...) asparagine) is linked at Asn-3270. Cys-3299 and Cys-3327 are disulfide-bonded.

Laminin is a complex glycoprotein, consisting of three different polypeptide chains (alpha, beta, gamma), which are bound to each other by disulfide bonds into a cross-shaped molecule comprising one long and three short arms with globules at each end. Alpha-3 is a subunit of laminin-5 (laminin-332 or epiligrin/kalinin/nicein), laminin-6 (laminin-311 or K-laminin) and laminin-7 (laminin-321 or KS-laminin). As to expression, basal membrane of the upper alimentary tract and urinary and nasal epithelia, salivary glands and teeth (both variants). Isoform A is predominantly expressed in skin, hair follicles and developing neurons of the trigeminal ganglion. Isoform B was found in bronchi, alveoli, stomach, intestinal crypts, whisker pads, CNS, telencephalic neuroectoderm, thalamus, Rathke pouch and periventricular subependymal germinal layer.

The protein localises to the secreted. It localises to the extracellular space. It is found in the extracellular matrix. The protein resides in the basement membrane. Functionally, binding to cells via a high affinity receptor, laminin is thought to mediate the attachment, migration and organization of cells into tissues during embryonic development by interacting with other extracellular matrix components. Its function is as follows. Laminin-5 is thought to be involved in (1) cell adhesion via integrin alpha-3/beta-1 in focal adhesion and integrin alpha-6/beta-4 in hemidesmosomes, (2) signal transduction via tyrosine phosphorylation of pp125-FAK and p80, (3) differentiation of keratinocytes. The protein is Laminin subunit alpha-3 (Lama3) of Mus musculus (Mouse).